The following is an 808-amino-acid chain: MSEIEEKFNESSYGADSIKVLKGLEAVRKRPGMYIGDVGDGSGLHHMIYEVVDNAIDESLAGYCDLVRVTLNKNGSVTVSDNGRGIPVEIHQEEGISAAEVIMTQLHAGGKFDQNSYKVSGGLHGVGVSVVNALSEWLELRIWRNNKEYLIRFNNGITEAPLAVVNEDINKKGTEVTFFPSVETFTNIEFDFGTIEHRLRELAFLNSGVKILLVDNRFEEAKEVEFYYTGGIEAYVKYIDRAKHAVHPCIVVNTENTESGISLELAMHWNDSYHENILCFTNNIRQRDGGTHLSAFKSAITRVITSYLDTTGLNKKSKNDFSGEDTREGLCCVLSVKVPDPKFSSQTKDKLVSSEVRPVVENAVYTKVLEWFEEHPAESKAIIAKIMEAANAREAARKARELTRRKSALEVSNLPGKLADCHAKDPAISELFIVEGDSAGGTAKQGRDSKIQAILPLRGKILNVERARFDKMLGSDQIGTLITALGTGVDNREFSLEKLRYHKVIIMTDADVDGSHIRTLLLTFFYRHMPELINKGYLYIAQPPLYKVKKGAAEFYLKNEQALQDYLIKSTINDATLTLDGKEQLVGDNLEELINKVVKFNGLLDHASKKFNRSITEILAINDLLNNKIFELESDSRLQKALDVLNSLEESPDKTNWEVLKHENKVEFFRFSRGLKESKILLKEQLESFEFVQISKLALTIFDIFDKQLKLIVKSQEFGILTASQLLNAIIECGKRGISIQRFKGLGEMNSNQLWETTLDPAKRTLLQVRVAEVDEAEGIFSTLMGDVVEPRRLFIQANALNVVNLDV.

The region spanning 429–544 (SELFIVEGDS…KGYLYIAQPP (116 aa)) is the Toprim domain. Residues Glu-435, Asp-509, and Asp-511 each coordinate Mg(2+).

This sequence belongs to the type II topoisomerase GyrB family. Heterotetramer, composed of two GyrA and two GyrB chains. In the heterotetramer, GyrA contains the active site tyrosine that forms a transient covalent intermediate with DNA, while GyrB binds cofactors and catalyzes ATP hydrolysis. Requires Mg(2+) as cofactor. It depends on Mn(2+) as a cofactor. Ca(2+) is required as a cofactor.

It localises to the cytoplasm. It carries out the reaction ATP-dependent breakage, passage and rejoining of double-stranded DNA.. A type II topoisomerase that negatively supercoils closed circular double-stranded (ds) DNA in an ATP-dependent manner to modulate DNA topology and maintain chromosomes in an underwound state. Negative supercoiling favors strand separation, and DNA replication, transcription, recombination and repair, all of which involve strand separation. Also able to catalyze the interconversion of other topological isomers of dsDNA rings, including catenanes and knotted rings. Type II topoisomerases break and join 2 DNA strands simultaneously in an ATP-dependent manner. This Rickettsia felis (strain ATCC VR-1525 / URRWXCal2) (Rickettsia azadi) protein is DNA gyrase subunit B.